A 414-amino-acid chain; its full sequence is NADH-quinone oxidoreductase subunit D (414 aa).

The protein belongs to the complex I 49 kDa subunit family. As to quaternary structure, NDH-1 is composed of 14 different subunits. Subunits NuoB, C, D, E, F, and G constitute the peripheral sector of the complex.

The protein resides in the cell inner membrane. The catalysed reaction is a quinone + NADH + 5 H(+)(in) = a quinol + NAD(+) + 4 H(+)(out). Functionally, NDH-1 shuttles electrons from NADH, via FMN and iron-sulfur (Fe-S) centers, to quinones in the respiratory chain. The immediate electron acceptor for the enzyme in this species is believed to be ubiquinone. Couples the redox reaction to proton translocation (for every two electrons transferred, four hydrogen ions are translocated across the cytoplasmic membrane), and thus conserves the redox energy in a proton gradient. This Akkermansia muciniphila (strain ATCC BAA-835 / DSM 22959 / JCM 33894 / BCRC 81048 / CCUG 64013 / CIP 107961 / Muc) protein is NADH-quinone oxidoreductase subunit D.